The following is a 102-amino-acid chain: Large ribosomal subunit protein uL23c (102 aa).

This sequence belongs to the universal ribosomal protein uL23 family. Part of the 50S ribosomal subunit.

Its subcellular location is the plastid. The protein localises to the chloroplast. In terms of biological role, binds to 23S rRNA. This chain is Large ribosomal subunit protein uL23c (rpl23), found in Trieres chinensis (Marine centric diatom).